The primary structure comprises 242 residues: Neuromodulin (242 aa).

A disordered region spans residues 1–242; that stretch reads MLCCMRRTKQ…EEREADQEHA (242 aa). Residues cysteine 3 and cysteine 4 are each lipidated (S-palmitoyl cysteine). Residues 9–32 show a composition bias toward basic and acidic residues; that stretch reads KQVEKNDEDQKIEQDGIKPEDKAH. The region spanning 31–60 is the IQ domain; the sequence is AHKAATKIQASFRGHITRKKLKGEKKGDAQ. The residue at position 41 (serine 41) is a Phosphoserine; by PHK and PKC. Composition is skewed to basic and acidic residues over residues 66–84 and 98–117; these read GNEKDEAPVADGVEKKEGE and KAEETGKAGETPSEEKKGEG. Polar residues predominate over residues 142–157; it reads ETESATKASTDNSPSS. Phosphoserine is present on residues serine 154, serine 156, and serine 157. Residues 158-170 show a composition bias toward basic and acidic residues; that stretch reads KAEDAPAKEEPKQ. Positions 171–203 are enriched in low complexity; the sequence is ADVPAAVTAAAAATTPAAEDAAAKATAQPPTDA. Threonine 185 is subject to Phosphothreonine. Residues serine 206 and serine 207 each carry the phosphoserine; by CK2 modification. Residues 209 to 242 are compositionally biased toward basic and acidic residues; sequence AEEKIEAVDETKPKESARQDEGKGEEREADQEHA.

It belongs to the neuromodulin family. Identified in a complex containing FGFR4, NCAM1, CDH2, PLCG1, FRS2, SRC, SHC1, GAP43 and CTTN. Interacts (via IQ domain) with calmodulin. Binds calmodulin with a greater affinity in the absence of Ca(2+) than in its presence. Phosphorylated. Phosphorylation of this protein by a protein kinase C is specifically correlated with certain forms of synaptic plasticity. Post-translationally, palmitoylated by ZDHHC3. Palmitoylation is regulated by ARF6 and is essential for plasma membrane association and axonal and dendritic filopodia induction. Deacylated by LYPLA2.

It is found in the cell membrane. It localises to the cell projection. The protein localises to the growth cone membrane. Its subcellular location is the synapse. The protein resides in the filopodium membrane. It is found in the perikaryon. It localises to the dendrite. The protein localises to the axon. Its subcellular location is the cytoplasm. In terms of biological role, this protein is associated with nerve growth. It is a major component of the motile 'growth cones' that form the tips of elongating axons. Plays a role in axonal and dendritic filopodia induction. In Felis catus (Cat), this protein is Neuromodulin (GAP43).